The chain runs to 51 residues: Insulin (51 aa).

Disulfide bonds link Cys-7-Cys-37, Cys-19-Cys-50, and Cys-36-Cys-41.

The protein belongs to the insulin family. In terms of assembly, heterodimer of a B chain and an A chain linked by two disulfide bonds.

The protein resides in the secreted. In terms of biological role, insulin decreases blood glucose concentration. It increases cell permeability to monosaccharides, amino acids and fatty acids. It accelerates glycolysis, the pentose phosphate cycle, and glycogen synthesis in liver. The protein is Insulin (INS) of Balaenoptera physalus (Fin whale).